The chain runs to 830 residues: Protein translocase subunit SecA (830 aa).

Residues Gln-86, 104-108 (GEGKT), and Asp-491 each bind ATP. Zn(2+) is bound by residues Cys-813, Cys-815, Cys-824, and Cys-825.

This sequence belongs to the SecA family. As to quaternary structure, monomer and homodimer. Part of the essential Sec protein translocation apparatus which comprises SecA, SecYEG and auxiliary proteins SecDF. Other proteins may also be involved. Zn(2+) is required as a cofactor.

It is found in the cell membrane. The protein localises to the cytoplasm. The enzyme catalyses ATP + H2O + cellular proteinSide 1 = ADP + phosphate + cellular proteinSide 2.. Its function is as follows. Part of the Sec protein translocase complex. Interacts with the SecYEG preprotein conducting channel. Has a central role in coupling the hydrolysis of ATP to the transfer of proteins into and across the cell membrane, serving as an ATP-driven molecular motor driving the stepwise translocation of polypeptide chains across the membrane. The sequence is that of Protein translocase subunit SecA from Syntrophomonas wolfei subsp. wolfei (strain DSM 2245B / Goettingen).